The chain runs to 67 residues: Small ribosomal subunit protein eS17 (67 aa).

This sequence belongs to the eukaryotic ribosomal protein eS17 family. As to quaternary structure, part of the 30S ribosomal subunit.

This is Small ribosomal subunit protein eS17 from Thermococcus kodakarensis (strain ATCC BAA-918 / JCM 12380 / KOD1) (Pyrococcus kodakaraensis (strain KOD1)).